The primary structure comprises 194 residues: Homing endonuclease I-DmoI (194 aa).

In terms of domain architecture, DOD-type homing endonuclease spans 14–147; that stretch reads LLGLIIGDGG…VSRWLNNLGV (134 aa). Catalysis depends on residues aspartate 21 and glutamate 117.

A divalent metal cation serves as cofactor.

Its function is as follows. Endonuclease involved in intron homing. Recognizes DNA in the 23S rRNA gene intron (minimally 5'-CCGGGTAAGTTCCGG-3'), cutting after A-8 on the top and C-11 on the bottom strand. Has a slow turnover rate, cuts the coding strand with a slight preference over the non-coding strand. The sequence is that of Homing endonuclease I-DmoI from Desulfurococcus mucosus (Desulfurococcus mobilis).